Consider the following 238-residue polypeptide: Large ribosomal subunit protein uL1 (238 aa).

It belongs to the universal ribosomal protein uL1 family. As to quaternary structure, part of the 50S ribosomal subunit.

Functionally, binds directly to 23S rRNA. The L1 stalk is quite mobile in the ribosome, and is involved in E site tRNA release. Its function is as follows. Protein L1 is also a translational repressor protein, it controls the translation of the L11 operon by binding to its mRNA. This Rickettsia prowazekii (strain Madrid E) protein is Large ribosomal subunit protein uL1.